We begin with the raw amino-acid sequence, 320 residues long: Glutathione synthetase (320 aa).

The ATP-grasp domain occupies 127–312 (KLAITEFPRF…VAGLMIDALE (186 aa)). 153–209 (LAEHEDIILKPLDGMGGAGIFRIQNTDHNIGVIIETLTRYGTRTIMAQRFLPEIREG) contributes to the ATP binding site. 2 residues coordinate Mg(2+): Glu-283 and Asn-285.

This sequence belongs to the prokaryotic GSH synthase family. The cofactor is Mg(2+). Requires Mn(2+) as cofactor.

The catalysed reaction is gamma-L-glutamyl-L-cysteine + glycine + ATP = glutathione + ADP + phosphate + H(+). It functions in the pathway sulfur metabolism; glutathione biosynthesis; glutathione from L-cysteine and L-glutamate: step 2/2. This chain is Glutathione synthetase, found in Nitrosomonas europaea (strain ATCC 19718 / CIP 103999 / KCTC 2705 / NBRC 14298).